The primary structure comprises 180 residues: Stathmin-3 (180 aa).

An SLD domain is found at G38–G180. A compositionally biased stretch (low complexity) spans S60 to P74. A disordered region spans residues S60–L82. A coiled-coil region spans residues P75–S179.

It belongs to the stathmin family.

The sequence is that of Stathmin-3 (STMN3) from Gallus gallus (Chicken).